A 226-amino-acid chain; its full sequence is MSFVESGRRSAPLRRRPGTPVPFARPAYSVFSQGDSWGEGEVEEEEGCDQVARDLRAEFSAGSSSKLRKDPVLQPDGDGSPVLPDKRNGIFSADAGGKALARRWPVQVLSILCSLLFAILLACLLAITYLIVKELHAENLKNEDDVNTGLLGFWSLLIISLTAGFSCCSFSWTVTYFDSFEPGMFPPTPLSPARFKKMTGHSFHMGYSMAILNGIVAALTVAWCLM.

The tract at residues 1–26 is disordered; it reads MSFVESGRRSAPLRRRPGTPVPFARP. Residues serine 2, serine 36, serine 60, serine 65, and serine 80 each carry the phosphoserine modification. The tract at residues 62–81 is disordered; sequence GSSSKLRKDPVLQPDGDGSP. Transmembrane regions (helical) follow at residues 111–131, 150–170, and 205–225; these read ILCSLLFAILLACLLAITYLI, LLGFWSLLIISLTAGFSCCSF, and MGYSMAILNGIVAALTVAWCL.

This sequence belongs to the ARL6IP6 family.

The protein localises to the nucleus inner membrane. This Bos taurus (Bovine) protein is ADP-ribosylation factor-like protein 6-interacting protein 6 (ARL6IP6).